Reading from the N-terminus, the 93-residue chain is MNINEIKRKIIPILLKHGVKRASIFGSYARNEQKETSDIDILVEFGEGKSLLDLVRLKYELEEVLGKEVDVLTYNSIHPLLKDRILNEAVDVL.

The GSX(10)DXD motif signature appears at 26–40 (GSYARNEQKETSDID). Mg(2+)-binding residues include aspartate 38, aspartate 40, and aspartate 70.

The protein belongs to the MntA antitoxin family. In terms of assembly, probably forms a complex with cognate toxin MJ0434. It depends on Mg(2+) as a cofactor.

The catalysed reaction is L-tyrosyl-[protein] + ATP = O-(5'-adenylyl)-L-tyrosyl-[protein] + diphosphate. It catalyses the reaction O-(5'-adenylyl)-L-tyrosyl-[protein] + ATP = O-[5'-(adenylyl-(5'-&gt;3')-adenylyl)]-L-tyrosyl-[protein] + diphosphate. Functionally, probable antitoxin component of a putative type VII toxin-antitoxin (TA) system. Neutralizes cognate toxic MJ0434 by di-AMPylation. The protein is Putative protein adenylyltransferase MJ0435 of Methanocaldococcus jannaschii (strain ATCC 43067 / DSM 2661 / JAL-1 / JCM 10045 / NBRC 100440) (Methanococcus jannaschii).